Here is a 545-residue protein sequence, read N- to C-terminus: MTQLTQSSCWQALIADAAKLPHMRDLFAQNPQRFEQMSLNACGLFLDYSKNRADETTLKLLFSLAKEAKLTEKIAAMFNGDIINTTEQRAVLHTALRSKACQDIRVDGVNIVPEVQQTLDKMAQFVDSVQTGQCKGYTGKRITDIVSIGIGGSFLGPKIVSQALRPYWKAGLNCHFVANVDASSICEKLKLLNAETTLFVMSSKSFGTQETLTNTLSAKDWFLDQGATQADIAKHFVAVTSNVTKATEFGMDADNIFPMWDWVGGRYSLWSAIGLPIALLIGMDNFRLLLDGAHQMDEHVKAAPLEQNMPVIMALLSVLYTNFHGAQSHVVLTYDHYLRGLPAYFQQLDMESNGKSVTLNGTQVDYSTGPVIWGGEGTNGQHAYHQLLHQGTALIPADFIMPLQSHNPLGEHHAQLASNCFGQTQALMQGRTFEEAMAELSQSSLNEADKTLIAKHKVMLGNKPSNTLLMDKLTPQTLGSLIALYEHRTLVQGAIWQINSFDQWGVELGKQLGNDVLARIGAAHNATELDSSSNALINRFRQGKI.

The active-site Proton donor is the Glu351. Residues His382 and Lys510 contribute to the active site.

Belongs to the GPI family.

It localises to the cytoplasm. The enzyme catalyses alpha-D-glucose 6-phosphate = beta-D-fructose 6-phosphate. Its pathway is carbohydrate biosynthesis; gluconeogenesis. The protein operates within carbohydrate degradation; glycolysis; D-glyceraldehyde 3-phosphate and glycerone phosphate from D-glucose: step 2/4. Functionally, catalyzes the reversible isomerization of glucose-6-phosphate to fructose-6-phosphate. The sequence is that of Glucose-6-phosphate isomerase from Shewanella denitrificans (strain OS217 / ATCC BAA-1090 / DSM 15013).